The chain runs to 398 residues: Selenide, water dikinase (398 aa).

Positions 1–21 (MSHKRPQSSAGESNGAVDLKT) are disordered. Cys46 is a catalytic residue. Residues Lys49, 72–74 (GMD), Asp97, Asp120, and 171–174 (GGQT) contribute to the ATP site. Asp74 contacts Mg(2+). Asp120 is a Mg(2+) binding site. Asp278 is a binding site for Mg(2+).

The protein belongs to the selenophosphate synthase 1 family. Class I subfamily. As to quaternary structure, homodimer. Mg(2+) is required as a cofactor.

The catalysed reaction is hydrogenselenide + ATP + H2O = selenophosphate + AMP + phosphate + 2 H(+). Functionally, synthesizes selenophosphate from selenide and ATP. This Leishmania major protein is Selenide, water dikinase.